Reading from the N-terminus, the 295-residue chain is GATA transcription factor 18 (295 aa).

The GATA-type zinc finger occupies 148 to 202 (SLLARRCANCDTTSTPLWRNGPRGPKSLCNACGIRFKKEERRTTAATGNTVVGAA).

The protein belongs to the type IV zinc-finger family. Class B subfamily. As to quaternary structure, homodimer. Forms heterodimers with GATA19, GATA22 and GATA21. Interacts with JAG. Binds to AGO10/PNH. Expressed in vegetative and inflorescence shoot apical meristems (SAMs), axillary (SAMs), floral meristems, developing ovules and stamens, vascular tissues, and in the embryo.

The protein resides in the nucleus. Functionally, transcriptional factor that specifically binds 5'-GATA-3' or 5'-GAT-3' motifs within gene promoters (including its own promoter and GATA21 promoter), thus regulating the expression of genes mostly involved in hormone responses and floral organ specification (including genes regulating hormones responses). Regulates both flower and shoot apical meristem (SAM) development, especially for establishing organ boundaries in shoots and flowers, probably by controlling the number and position of WUS-expressing cells. Coregulates, with AGO10/PNH, the shoot apical meristem (SAM) organization. Regulates floral organ development via the promotion of JAG and NPR5/BOP2 expression. Modulates cytokinin homeostasis in organ boundaries by regulating CKX3 expression. Involved in cell proliferation and differentiation. Required to position the inductive proembryo boundary via the regulation of gene expression and for early embryonic development. Together with GIF1/AN3, mediates cotyledon identity by preventing ectopic root formation through the repression of PLT1 expression. This Arabidopsis thaliana (Mouse-ear cress) protein is GATA transcription factor 18.